Consider the following 94-residue polypeptide: Small ribosomal subunit protein uS19 (94 aa).

Belongs to the universal ribosomal protein uS19 family.

Its function is as follows. Protein S19 forms a complex with S13 that binds strongly to the 16S ribosomal RNA. This chain is Small ribosomal subunit protein uS19, found in Clostridium botulinum (strain Langeland / NCTC 10281 / Type F).